A 221-amino-acid polypeptide reads, in one-letter code: Phosphoglycolate phosphatase (221 aa).

The Nucleophile role is filled by aspartate 7. 2 residues coordinate Mg(2+): aspartate 7 and aspartate 9. Lysine 148 contacts substrate. Residues aspartate 171 and aspartate 175 each contribute to the Mg(2+) site.

The protein belongs to the archaeal SPP-like hydrolase family. Mg(2+) is required as a cofactor.

The catalysed reaction is 2-phosphoglycolate + H2O = glycolate + phosphate. Its function is as follows. Catalyzes the dephosphorylation of 2-phosphoglycolate. The chain is Phosphoglycolate phosphatase from Methanothermobacter thermautotrophicus (strain ATCC 29096 / DSM 1053 / JCM 10044 / NBRC 100330 / Delta H) (Methanobacterium thermoautotrophicum).